The following is a 132-amino-acid chain: Histone H2A.1 (132 aa).

Residues 1-21 form a disordered region; that stretch reads MSGGKGKAGTSEKASTSRSAK. N-acetylserine is present on Ser-2. N6-acetyllysine occurs at positions 5 and 7. Gln-105 bears the N5-methylglutamine mark. Phosphoserine is present on Ser-129. A [ST]-Q motif motif is present at residues 129–130; the sequence is SQ.

It belongs to the histone H2A family. The nucleosome is a histone octamer containing two molecules each of H2A, H2B, H3 and H4 assembled in one H3-H4 heterotetramer and two H2A-H2B heterodimers. The octamer wraps approximately 147 bp of DNA. In terms of processing, phosphorylated to form H2AS128ph (gamma-H2A) in response to DNA double-strand breaks (DSBs) generated by exogenous genotoxic agents and by stalled replication forks. Phosphorylation is dependent on the DNA damage checkpoint kinases MEC1/ATR and TEL1/ATM, spreads on either side of a detected DSB site and may mark the surrounding chromatin for recruitment of proteins required for DNA damage signaling and repair. Gamma-H2A is removed from the DNA prior to the strand invasion-primer extension step of the repair process and subsequently dephosphorylated. Dephosphorylation is necessary for efficient recovery from the DNA damage checkpoint. Acetylated by ESA1 to form H2AK4ac and H2AK7ac.

It is found in the nucleus. The protein localises to the chromosome. Its function is as follows. Core component of nucleosome which plays a central role in DNA double strand break (DSB) repair. Nucleosomes wrap and compact DNA into chromatin, limiting DNA accessibility to the cellular machineries which require DNA as a template. Histones thereby play a central role in transcription regulation, DNA repair, DNA replication and chromosomal stability. DNA accessibility is regulated via a complex set of post-translational modifications of histones, also called histone code, and nucleosome remodeling. In Candida albicans (strain SC5314 / ATCC MYA-2876) (Yeast), this protein is Histone H2A.1 (HTA1).